The following is a 527-amino-acid chain: Coiled-coil domain-containing protein 148 (527 aa).

2 coiled-coil regions span residues 289-353 (LAKD…TEIK) and 401-438 (LEKR…VAVQ).

This Mus musculus (Mouse) protein is Coiled-coil domain-containing protein 148 (Ccdc148).